We begin with the raw amino-acid sequence, 278 residues long: Probable F-box protein At1g14315 (278 aa).

The region spanning 1-43 (MQLLPHDTVEDILERVPVKSLLRFKSACKQWKLTIESQYFQAK) is the F-box domain.

The polypeptide is Probable F-box protein At1g14315 (Arabidopsis thaliana (Mouse-ear cress)).